A 1174-amino-acid polypeptide reads, in one-letter code: MDRQPKVYSDPDNGFFFLDVPMPDDGQGGQQTATTAAGGAFGVGGGHSVPYVRIMNGVSGIQIGNHNAMSIASCWSPSYTDRRRRSYPKTATNAAADRVAAAVSAANAAVNAAAAAAAAGGGGGANLLAAAVTCANQRGCCGGNGGHSLPPTRMPKTNATAAAAPAVAGASNAKSDNNHANATSGAGSAAATPAATTPAATAVENRRPSPSPSTASTAPCDEGSSPRHHRPSHVSVGTQATPSTPIPIPAPRCSTGQQQQQPQAKKLKPAKADPLLYAATMPPPASVTTAAAAAVAPESESSPAASAPPAAAAMATGGDDEDQSSFSFVSDDVLGEFEDLRIAGLPVRDEMRPPTPTMTVIPVSRPFRAGRDSGRDALFDDAVESVRCYCHGILGNSRFCALVNEKCSEPAKERMARIRRYAADVTRCGPLALYTAIVSSANRLIQTDPSCDLDLAECYVETASKRNAVPLSAFYRDCDRLRDAVAAFFKTYGMVVDAMAQRITERVGPALGRGLYSTVVMMDRCGNSFQGREETPISVFARVAAALAVECEVDGGVSYKILSSKPVDAAQAFDAFLSALCSFAIIPSPRVLAYAGFGGSNPIFDAVSYRAQFYSAESTINGTLHDICDMVTNGLSVSVSAADLGGDIVASLHILGQQCKALRPYARFKTVLRIYFDIWSVDALKIFSFILDVGREYEGLMAFAVNTPRIFWDRYLDSSGDKMWLMFARREAAALCGLDLKSFRNVYEKMERDGRSAITVSPWWAVCQLDACVARGNTAVVFPHNVKSMIPENIGRPAVCGPGVSVVSGGFVGCTPIHELCINLENCVLEGAAVESSVDVVLGLGCRFSFKALESLVRDAVVLGNLLIDMTVRTNAYGAGKLLTLYRDLHIGVVGFHAVMNRLGQKFADMESYDLNQRIAEFIYYTAVRASVDLCMAGADPFPKFPKSLYAAGRFYPDLFDDDERGPRRMTKEFLEKLREDVVKHGIRNASFITGCSADEAANLAGTTPGFWPRRDNVFLEQTPLMMTPTKDQMLDECVRSVKIEPHRLHEEDLSCLGENRPVELPVLNSRLRQISKESATVAVRRGRSAPFYDDSDDEDEVACSETGWTVSTDAVIKMCVDRQPFVDHAQSLPVAIGFGGSSVELARHLRRGNALGLSVGVYKCSMPPSVNYR.

The short motif at 50-72 (PYVRIMNGVSGIQIGNHNAMSIA) is the RIP homotypic interaction motif (RHIM) element. Disordered regions lie at residues 170–269 (ASNA…KLKP) and 291–325 (AAAA…DQSS). Composition is skewed to low complexity over residues 182–202 (ATSG…AATA), 233–243 (HVSVGTQATPS), and 291–316 (AAAA…AMAT).

The protein belongs to the ribonucleoside diphosphate reductase large chain family. In terms of assembly, self-assembles into homo-oligomeric amyloid fibrils. Interacts with host RIPK1 (via RIP homotypic interaction motif); this interaction inhibits RIPK1 ubiquitination thereby preventing effective activation of host NF-kappa-B. Interacts with host RIPK3 (via RIP homotypic interaction motif); this interaction disrupts RIPK3-RIPK1 interactions characteristic of TNF-alpha induced necroptosis, thereby suppressing this death pathway. Interacts (via RIP homotypic interaction motif) with host ZBP1 (via RIP homotypic interaction motif); this interaction inhibits recruitment of RIPK1 and RIPK3 to ZBP1 and prevents ZBP1-induced NF-kappa-B activation. Undergoes proteolytic cleavage, generating two peptides, a N-terminal and a 116 kDa. The N-terminal peptide retains RIPK1- and RIPK3-binding activity as well as cell death suppression activity.

The protein localises to the virion. It is found in the host cytoplasm. Provides optimal viral replication conditions by promoting host cell survival and avoiding the host inflammatory response linked to NF-kappa-B activation. Blocks RIPK1 ubiquitination, thereby preventing NF-kappa-B activation and virally induced inflammatory response. Prevents host necroptosis by targeting RIPK3 thereby preventing the formation of necroptotic RIPK1-RIPK3 complexes. Also inhibits ZBP1-induced necroptosis. Does not have ribonucleotide reductase activity. Betaherpesviruses probably use another strategy to expand the dNTP pool in a quiescent host cell. The sequence is that of Ribonucleoside-diphosphate reductase large subunit-like protein from Murid herpesvirus 1 (strain Smith) (MuHV-1).